Here is a 187-residue protein sequence, read N- to C-terminus: Signal peptidase complex catalytic subunit SEC11 (187 aa).

At 1-18 the chain is on the cytoplasmic side; it reads MLSSLSPYMANPRNTLSQ. Residues 19-39 traverse the membrane as a helical; Signal-anchor for type II membrane protein segment; it reads VLNFGLVLSSAFMVWKALSVI. The Lumenal portion of the chain corresponds to 40-187; the sequence is TNSASPVVVV…MGLMVMLQRE (148 aa). Residues S53 and H92 each act as charge relay system in the active site. N-linked (GlcNAc...) asparagine glycosylation occurs at N125. D129 serves as the catalytic Charge relay system. The segment at 173–184 is C-terminal short (CTS) helix; it reads VLLGFMGLMVML.

It belongs to the peptidase S26B family. Component of the signal peptidase complex (SPC) composed of a catalytic subunit SEC11 and three accessory subunits SPC1, SPC2 and SPC3. The complex induces a local thinning of the ER membrane which is used to measure the length of the signal peptide (SP) h-region of protein substrates. This ensures the selectivity of the complex towards h-regions shorter than 18-20 amino acids. SPC associates with the translocon complex.

Its subcellular location is the endoplasmic reticulum membrane. It catalyses the reaction Cleavage of hydrophobic, N-terminal signal or leader sequences from secreted and periplasmic proteins.. Its function is as follows. Catalytic component of the signal peptidase complex (SPC) which catalyzes the cleavage of N-terminal signal sequences from nascent proteins as they are translocated into the lumen of the endoplasmic reticulum. Specifically cleaves N-terminal signal peptides that contain a hydrophobic alpha-helix (h-region) shorter than 18-20 amino acids. The chain is Signal peptidase complex catalytic subunit SEC11 (SEC11) from Ajellomyces capsulatus (strain G186AR / H82 / ATCC MYA-2454 / RMSCC 2432) (Darling's disease fungus).